The following is a 728-amino-acid chain: Phosphoribosylformylglycinamidine synthase subunit PurL (728 aa).

The active site involves His-42. ATP contacts are provided by Tyr-45 and Lys-84. Glu-86 is a binding site for Mg(2+). Substrate contacts are provided by residues 87-90 and Arg-109; that span reads SHNH. His-88 (proton acceptor) is an active-site residue. Asp-110 serves as a coordination point for Mg(2+). A substrate-binding site is contributed by Gln-237. Asp-265 provides a ligand contact to Mg(2+). Residue 309–311 participates in substrate binding; the sequence is ESQ. Residues Asp-491 and Gly-528 each coordinate ATP. Asn-529 contacts Mg(2+). Residue Ser-531 coordinates substrate.

This sequence belongs to the FGAMS family. Monomer. Part of the FGAM synthase complex composed of 1 PurL, 1 PurQ and 2 PurS subunits.

It localises to the cytoplasm. It carries out the reaction N(2)-formyl-N(1)-(5-phospho-beta-D-ribosyl)glycinamide + L-glutamine + ATP + H2O = 2-formamido-N(1)-(5-O-phospho-beta-D-ribosyl)acetamidine + L-glutamate + ADP + phosphate + H(+). Its pathway is purine metabolism; IMP biosynthesis via de novo pathway; 5-amino-1-(5-phospho-D-ribosyl)imidazole from N(2)-formyl-N(1)-(5-phospho-D-ribosyl)glycinamide: step 1/2. In terms of biological role, part of the phosphoribosylformylglycinamidine synthase complex involved in the purines biosynthetic pathway. Catalyzes the ATP-dependent conversion of formylglycinamide ribonucleotide (FGAR) and glutamine to yield formylglycinamidine ribonucleotide (FGAM) and glutamate. The FGAM synthase complex is composed of three subunits. PurQ produces an ammonia molecule by converting glutamine to glutamate. PurL transfers the ammonia molecule to FGAR to form FGAM in an ATP-dependent manner. PurS interacts with PurQ and PurL and is thought to assist in the transfer of the ammonia molecule from PurQ to PurL. The chain is Phosphoribosylformylglycinamidine synthase subunit PurL from Campylobacter jejuni (strain RM1221).